The primary structure comprises 334 residues: Aspartate carbamoyltransferase catalytic subunit (334 aa).

2 residues coordinate carbamoyl phosphate: R71 and T72. Position 99 (K99) interacts with L-aspartate. Carbamoyl phosphate contacts are provided by R121, H151, and Q154. R184 and R239 together coordinate L-aspartate. G280 and P281 together coordinate carbamoyl phosphate.

This sequence belongs to the aspartate/ornithine carbamoyltransferase superfamily. ATCase family. Heterododecamer (2C3:3R2) of six catalytic PyrB chains organized as two trimers (C3), and six regulatory PyrI chains organized as three dimers (R2).

The catalysed reaction is carbamoyl phosphate + L-aspartate = N-carbamoyl-L-aspartate + phosphate + H(+). It functions in the pathway pyrimidine metabolism; UMP biosynthesis via de novo pathway; (S)-dihydroorotate from bicarbonate: step 2/3. Functionally, catalyzes the condensation of carbamoyl phosphate and aspartate to form carbamoyl aspartate and inorganic phosphate, the committed step in the de novo pyrimidine nucleotide biosynthesis pathway. This chain is Aspartate carbamoyltransferase catalytic subunit, found in Pseudomonas fluorescens (strain SBW25).